A 360-amino-acid chain; its full sequence is Phosphoserine aminotransferase (360 aa).

Residue Arg-41 participates in L-glutamate binding. Pyridoxal 5'-phosphate is bound by residues Trp-101, Thr-152, Asp-172, and Gln-195. An N6-(pyridoxal phosphate)lysine modification is found at Lys-196. 237 to 238 contacts pyridoxal 5'-phosphate; the sequence is NT.

Belongs to the class-V pyridoxal-phosphate-dependent aminotransferase family. SerC subfamily. As to quaternary structure, homodimer. Pyridoxal 5'-phosphate serves as cofactor.

The protein resides in the cytoplasm. It catalyses the reaction O-phospho-L-serine + 2-oxoglutarate = 3-phosphooxypyruvate + L-glutamate. The enzyme catalyses 4-(phosphooxy)-L-threonine + 2-oxoglutarate = (R)-3-hydroxy-2-oxo-4-phosphooxybutanoate + L-glutamate. The protein operates within amino-acid biosynthesis; L-serine biosynthesis; L-serine from 3-phospho-D-glycerate: step 2/3. Its pathway is cofactor biosynthesis; pyridoxine 5'-phosphate biosynthesis; pyridoxine 5'-phosphate from D-erythrose 4-phosphate: step 3/5. Functionally, catalyzes the reversible conversion of 3-phosphohydroxypyruvate to phosphoserine and of 3-hydroxy-2-oxo-4-phosphonooxybutanoate to phosphohydroxythreonine. This Burkholderia lata (strain ATCC 17760 / DSM 23089 / LMG 22485 / NCIMB 9086 / R18194 / 383) protein is Phosphoserine aminotransferase.